The primary structure comprises 116 residues: M-zodatoxin-Lt6a/b (116 aa).

The first 22 residues, 1–22, serve as a signal peptide directing secretion; that stretch reads MKYFVVALTLAVAFVCIEECKT. 2 consecutive propeptides follow at residues 23-44 and 80-83; these read VEIG…EEAR and EEAR. 2 short sequence motifs (processing quadruplet motif) span residues 41–44 and 80–83; these read EEAR. Q84 is modified (pyrrolidone carboxylic acid).

This sequence belongs to the cationic peptide 03 (latarcin) family. 06 subfamily. Post-translationally, cleavage of the propeptide depends on the processing quadruplet motif (XXXR, with at least one of X being E). As to expression, expressed by the venom gland.

It is found in the secreted. Does not have antimicrobial activity against neither Gram-positive bacteria (A.globiformis VKM Ac-1112 (MIC&gt;70 uM), and B.subtilis VKM B-501 (MIC&gt;70 uM)), nor Gram-negative bacteria (E.coli DH5-alpha (MIC&gt;70 uM), E.coli MH1 (MIC&gt;70 uM), and P.aeruginosa PAO1 (MIC&gt;70 uM)), nor yeasts (P.pastoris GS115 (MIC&gt;70 uM), and S.cerevisiae Y190 (MIC&gt;70 uM)). Does not have hemolytic activity against rabbit erythrocytes. However, it causes some conductance changes in planar bilayer membranes, without membrane rupture, suggesting a cytolytic function on other biological targets. It causes paralysis, but is not lethal when injected into insect (M.domestica) larvae. The chain is M-zodatoxin-Lt6a/b from Lachesana tarabaevi (Spider).